A 93-amino-acid polypeptide reads, in one-letter code: Putative membrane protein insertion efficiency factor (93 aa).

Residues 72–93 (VPEHFPSWRGPHPKTPSRKTPE) are disordered. Positions 82 to 93 (PHPKTPSRKTPE) are enriched in basic residues.

This sequence belongs to the UPF0161 family.

It localises to the cell membrane. In terms of biological role, could be involved in insertion of integral membrane proteins into the membrane. The polypeptide is Putative membrane protein insertion efficiency factor (Deinococcus geothermalis (strain DSM 11300 / CIP 105573 / AG-3a)).